Reading from the N-terminus, the 178-residue chain is Caveolin-1 (178 aa).

An N-acetylserine modification is found at Ser2. Ser2 bears the Phosphoserine mark. Positions 2–94 are required for homooligomerization; that stretch reads SGGKYVDSEG…WKASFTTFTV (93 aa). The Cytoplasmic segment spans residues 2–104; it reads SGGKYVDSEG…TKYWFYRLLS (103 aa). Lys5 carries the N6-acetyllysine; alternate modification. Residue Lys5 forms a Glycyl lysine isopeptide (Lys-Gly) (interchain with G-Cter in ubiquitin); alternate linkage. At Tyr6 the chain carries Phosphotyrosine. Ser9 carries the phosphoserine modification. Tyr14 is subject to Phosphotyrosine; by ABL1. Tyr25 carries the phosphotyrosine modification. Residues Lys26, Lys30, Lys39, Lys47, and Lys57 each participate in a glycyl lysine isopeptide (Lys-Gly) (interchain with G-Cter in ubiquitin) cross-link. Residues 82–94 form an interaction with CAVIN3 region; that stretch reads DGIWKASFTTFTV. An intramembrane region (helical) is located at residues 105–125; sequence ALFGIPMALIWGIYFAILSFL. Topologically, residues 126 to 178 are cytoplasmic; sequence HIWAVVPCIKSFLIEIQCISRVYSIYVHTFCDPLFEAIGKIFSNIRINMQKEI. The interacts with SPRY1, SPRY2, SPRY3 and SPRY4 stretch occupies residues 131–142; that stretch reads VPCIKSFLIEIQ. S-palmitoyl cysteine attachment occurs at residues Cys133, Cys143, and Cys156. Residues 149–160 form an interacts with SPRY1, SPRY2, and SPRY4 region; it reads SIYVHTFCDPLF. The interval 167-178 is interacts with SPRY1, SPRY2, SPRY3 and SPRY4; that stretch reads FSNIRINMQKEI.

This sequence belongs to the caveolin family. As to quaternary structure, homooligomer. Interacts (via the N-terminus) with DPP4; the interaction is direct. Forms a stable heterooligomeric complex with CAV2 that targets to lipid rafts and drives caveolae formation. Interacts with PACSIN2; this interaction induces membrane tubulation. Interacts with BMX, BTK, CTNNB1, CDH1, GLIPR2, JUP, NOSTRIN, SNAP25 and STX1A. Interacts with SLC7A9. Interacts with TGFBR1. Interacts with CAVIN3 (via leucine-zipper domain) in a cholesterol-sensitive manner. Interacts with CAVIN1. Interacts with EHD2 in a cholesterol-dependent manner. Forms a ternary complex with UBXN6 and VCP; mediates CAV1 targeting to lysosomes for degradation. Interacts with ABCG1; this interaction regulates ABCG1-mediated cholesterol efflux. Interacts with NEU3; this interaction enhances NEU3 sialidase activity within caveola. Interacts (via C-terminus) with SPRY1, SPRY2 (via C-terminus), SPRY3, and SPRY4. In terms of processing, phosphorylated at Tyr-14 by ABL1 in response to oxidative stress. Ubiquitinated. Undergo monoubiquitination and multi- and/or polyubiquitination. Monoubiquitination of N-terminal lysines promotes integration in a ternary complex with UBXN6 and VCP which promotes oligomeric CAV1 targeting to lysosomes for degradation. Ubiquitinated by ZNRF1; leading to degradation and modulation of the TLR4-mediated immune response.

It localises to the golgi apparatus membrane. It is found in the cell membrane. Its subcellular location is the membrane. The protein localises to the caveola. The protein resides in the membrane raft. May act as a scaffolding protein within caveolar membranes. Forms a stable heterooligomeric complex with CAV2 that targets to lipid rafts and drives caveolae formation. Mediates the recruitment of CAVIN proteins (CAVIN1/2/3/4) to the caveolae. Interacts directly with G-protein alpha subunits and can functionally regulate their activity. Involved in the costimulatory signal essential for T-cell receptor (TCR)-mediated T-cell activation. Its binding to DPP4 induces T-cell proliferation and NF-kappa-B activation in a T-cell receptor/CD3-dependent manner. Recruits CTNNB1 to caveolar membranes and may regulate CTNNB1-mediated signaling through the Wnt pathway. Negatively regulates TGFB1-mediated activation of SMAD2/3 by mediating the internalization of TGFBR1 from membrane rafts leading to its subsequent degradation. Binds 20(S)-hydroxycholesterol (20(S)-OHC). This Otolemur garnettii (Small-eared galago) protein is Caveolin-1 (CAV1).